The primary structure comprises 146 residues: 3-hydroxyacyl-[acyl-carrier-protein] dehydratase FabZ (146 aa).

His49 is a catalytic residue.

This sequence belongs to the thioester dehydratase family. FabZ subfamily.

Its subcellular location is the cytoplasm. The enzyme catalyses a (3R)-hydroxyacyl-[ACP] = a (2E)-enoyl-[ACP] + H2O. Its function is as follows. Involved in unsaturated fatty acids biosynthesis. Catalyzes the dehydration of short chain beta-hydroxyacyl-ACPs and long chain saturated and unsaturated beta-hydroxyacyl-ACPs. This Psychrobacter arcticus (strain DSM 17307 / VKM B-2377 / 273-4) protein is 3-hydroxyacyl-[acyl-carrier-protein] dehydratase FabZ.